We begin with the raw amino-acid sequence, 350 residues long: Protein memo-1 homolog (350 aa).

It belongs to the MEMO1 family. Interacts with rho-1. Expressed in neuronal and non-neuronal cells in the head and tail, pharyngeal cells, spermatheca, distal tip cells, anchor cell and the intestine.

Functionally, plays a role in the oxidative stress response and the maintenance of longevity by regulating the interaction between GTPase rho-1 and oxidase bli-3. In turn, this serves to modulate bli-3 activity and the control of reactive oxygen species production. May control cell migration by relaying extracellular chemotactic signals to the microtubule cytoskeleton. In Caenorhabditis elegans, this protein is Protein memo-1 homolog.